The primary structure comprises 218 residues: MTDTKIKGILGTKLGMTQVFDENNRVVPVTVVKAGPNVVTQIRTEERDGYSAVQLAFGAIDPRKVNKPTSGQFAKAGVTPRRHVVELRVADTSEYEVGQELTAEVFEDGAYVDVTGTSKGKGFAGTMKRHGFAGQGASHGAQAVHRRPGSIGGCATPGRVFKGMRMSGRMGSDRITTQNLSVHKVDAENGLLLIKGAIPGRKGGLVIVKSAVKGGARA.

The protein belongs to the universal ribosomal protein uL3 family. In terms of assembly, part of the 50S ribosomal subunit. Forms a cluster with proteins L14 and L19.

Functionally, one of the primary rRNA binding proteins, it binds directly near the 3'-end of the 23S rRNA, where it nucleates assembly of the 50S subunit. The chain is Large ribosomal subunit protein uL3 from Rhodococcus jostii (strain RHA1).